The sequence spans 398 residues: Phosphoglycerate kinase (398 aa).

Substrate is bound by residues 23-25 (DFN), Arg-38, 61-64 (HMGK), Arg-122, and Arg-155. Residues Lys-206, Gly-297, Glu-328, and 354 to 357 (GGDS) each bind ATP.

The protein belongs to the phosphoglycerate kinase family. Monomer.

The protein localises to the cytoplasm. It catalyses the reaction (2R)-3-phosphoglycerate + ATP = (2R)-3-phospho-glyceroyl phosphate + ADP. It functions in the pathway carbohydrate degradation; glycolysis; pyruvate from D-glyceraldehyde 3-phosphate: step 2/5. The protein is Phosphoglycerate kinase of Clostridium botulinum (strain Loch Maree / Type A3).